Here is a 166-residue protein sequence, read N- to C-terminus: Urease accessory protein UreE (166 aa).

The protein belongs to the UreE family.

The protein resides in the cytoplasm. In terms of biological role, involved in urease metallocenter assembly. Binds nickel. Probably functions as a nickel donor during metallocenter assembly. The protein is Urease accessory protein UreE of Azotobacter vinelandii (strain DJ / ATCC BAA-1303).